The primary structure comprises 1535 residues: Protein artichoke (1535 aa).

Positions 1–19 (MMLLPIFLLLCIGINLIRA) are cleaved as a signal peptide. 34 LRR repeats span residues 64–87 (KGRIDELVLENNQLPALPGRFFGS), 89–110 (QIVRLMLRHNSIERVSNGWLNE), 112–135 (ENGLVEIFVVEPQLRSIPAESLNG), 136–157 (MINMLAITIQSEELKHLPDFSG), 158–181 (LLSLTYLSVQTGALQELPSHLFRH), 183–206 (PKLQHIHITGGSGLTRLEAGLFDG), 207–230 (LISLKNLDLSHNGLNWIHLRALSR), 231–256 (LPNLVSLKLSHNQISDVGMVGRIVKD), 257–280 (LEHLKKLRLDNNLITVIEDGSFVD), 281–304 (LPNLSELHLNDNRITELQYGAFLR), 306–328 (PQLKTIYLQNNLIRRIHPESLLQ), 331–356 (GSGVEAVHMYNNEIGHVEALRALLDA), 357–380 (LPRLRYLDMSGNLLSELPYGALRG), 382–404 (GTLEQLHLNHNHLRLIERDALMA), 406–429 (PALRELRMRNNSLSSDLPLPFWNL), 430–452 (PGLKGLDLAQNQFARVDSQLLAG), 453–476 (LPSLRRLDLSENGLIELAPNSFRH), 478–500 (PLLETLNISSNELTKIHSSTLIH), 521–545 (LPRIVERISLKGNQITSLPAAASKD), 548–571 (LPNLRMLDLSQNRIEQLPRHGFQG), 573–595 (MELRVLSLAQNELRQLKDTSFIG), 597–619 (QRLELLHLQENQLGEADERALLP), 620–643 (LAELRNLNLQSNKLEAITDNFFSN), 645–667 (SRLEQLDLSRNLIRSISPTAFDT), 669–691 (RSLEYLDLSGNALLDISVGLGNL), 692–714 (NNLRDIDLSYNQISRIQSDVIGG), 716–738 (RNVVEIRLSNNLIVELQQGTFRN), 739–762 (LPKLQYLDLSSNEIRNVEPGALKG), 764–786 (DELQEFVLADNKLVELKDHVFEE), 788–810 (PSLLASHFQYNKLRYISPESFHN), 811–834 (ANSLVFLNLSNNHFRNMENIGLRS), 835–858 (MRNLEVLDLSTNGVKLVSTMPLKA), 860–882 (NWLVELKMDNNQICRIQGSPFET), and 883–906 (MPRLRVLSMRNNQLRSIKERTFRN). An LRRCT domain is found at 919–963 (NPIDCNCEMQWLSVWLQETNFPYPGPKCQDGRLLRSARMERSLCV). Disordered regions lie at residues 1036 to 1055 (HSAISTSQRPKPTPTINSNI), 1253 to 1331 (TQAR…DSQY), 1377 to 1416 (VTTTTPQSPSDNQVTLAGPTSTVPPPPPASPPLRGGGRST), and 1429 to 1449 (AQPTAEEYQRTTPSGDNEGVA). Over residues 1253–1270 (TQARPKPTKSSGESSETA) the composition is skewed to polar residues. Composition is skewed to low complexity over residues 1271–1285 (TYEVTETTPDITTTT) and 1293–1315 (TSTTKASTTTTRSTTTTSTTQVT). 2 stretches are compositionally biased toward polar residues: residues 1316–1328 (PAENNASSSTELD) and 1377–1391 (VTTTTPQSPSDNQVT). The segment covering 1398–1407 (TVPPPPPASP) has biased composition (pro residues).

The protein localises to the secreted. It localises to the extracellular space. The protein resides in the extracellular matrix. It is found in the cytoplasm. Its function is as follows. Required for normal morphology and function of ciliated sensory organs. This Drosophila melanogaster (Fruit fly) protein is Protein artichoke.